The sequence spans 344 residues: GDSL esterase/lipase At5g03590 (344 aa).

Residues 1 to 19 form the signal peptide; the sequence is MHYLMKLFFSLSLFFGING. The active-site Nucleophile is Ser-41. Asn-126, Asn-227, and Asn-238 each carry an N-linked (GlcNAc...) asparagine glycan. Residue Asp-318 is part of the active site.

It belongs to the 'GDSL' lipolytic enzyme family.

The protein resides in the secreted. This chain is GDSL esterase/lipase At5g03590, found in Arabidopsis thaliana (Mouse-ear cress).